We begin with the raw amino-acid sequence, 376 residues long: N-acetyldiaminopimelate deacetylase (376 aa).

The active site involves D70. Residue E129 is the Proton acceptor of the active site.

It belongs to the peptidase M20A family. N-acetyldiaminopimelate deacetylase subfamily.

The enzyme catalyses N-acetyl-(2S,6S)-2,6-diaminopimelate + H2O = (2S,6S)-2,6-diaminopimelate + acetate. It functions in the pathway amino-acid biosynthesis; L-lysine biosynthesis via DAP pathway; LL-2,6-diaminopimelate from (S)-tetrahydrodipicolinate (acetylase route): step 3/3. In terms of biological role, catalyzes the conversion of N-acetyl-diaminopimelate to diaminopimelate and acetate. This is N-acetyldiaminopimelate deacetylase from Geobacillus sp. (strain WCH70).